The sequence spans 389 residues: MRLLKNNIILRLLNSYMVDSPQPANLTYLWNFGSLLGICLVLQILTGCFLAMHFTPHAEMAFNSVEHIMRDVQSGWIVRYTHANVASFFFIFVYAHIGRGLYYNSYKSPRVLLWSIGVIILVLMMAIGFLGYVIPFGQMSLWGATVITNLLSAIPVFGQDIVELIWGGFSVSNATLNRFFSLHYILPFVLAALVVAHFMALHIHGSNNPNGVTSNTDRYPMYPYFIFKDLVTIFAFFWILSVIVFFYPNLMGHQDNYIPADPMVTPASIVPEWYLLPFYAILRSIPDKLLGVVAMFGSLLILLVLPLTDLSRIRGNQFRPAMKFFFWFFVVNFIMLFWLGSQHPNTPYLEIGQLSTTFYFSFFLVIVPFTGLVENTLLDLNIKELDLNL.

The next 4 helical transmembrane spans lie at 32–52 (FGSL…FLAM), 76–98 (WIVR…AHIG), 113–133 (LWSI…LGYV), and 179–199 (FFSL…AHFM). 2 residues coordinate heme b: H82 and H96. Heme b-binding residues include H183 and H197. Residue H202 coordinates a ubiquinone. 4 helical membrane passes run 225 to 245 (FIFK…VIVF), 289 to 309 (LLGV…PLTD), 321 to 341 (AMKF…WLGS), and 348 to 368 (YLEI…VIVP).

It belongs to the cytochrome b family. In terms of assembly, fungal cytochrome b-c1 complex contains 10 subunits; 3 respiratory subunits, 2 core proteins and 5 low-molecular weight proteins. Cytochrome b-c1 complex is a homodimer. Requires heme b as cofactor.

Its subcellular location is the mitochondrion inner membrane. Component of the ubiquinol-cytochrome c reductase complex (complex III or cytochrome b-c1 complex) that is part of the mitochondrial respiratory chain. The b-c1 complex mediates electron transfer from ubiquinol to cytochrome c. Contributes to the generation of a proton gradient across the mitochondrial membrane that is then used for ATP synthesis. The protein is Cytochrome b (COB) of Strobilurus tenacellus.